A 197-amino-acid polypeptide reads, in one-letter code: Inner membrane-spanning protein YciB (197 aa).

5 helical membrane-spanning segments follow: residues 36–56 (IYSA…ALFL), 64–84 (GQWL…TFHS), 90–110 (WKAP…HFIG), 135–155 (LAWI…AFTF), and 162–182 (FKVF…GVYL).

Belongs to the YciB family.

Its subcellular location is the cell inner membrane. Its function is as follows. Plays a role in cell envelope biogenesis, maintenance of cell envelope integrity and membrane homeostasis. This is Inner membrane-spanning protein YciB from Pseudomonas putida (strain GB-1).